The chain runs to 594 residues: Pentatricopeptide repeat-containing protein At1g15480, mitochondrial (594 aa).

The transit peptide at 1 to 67 (MFALSKVLRR…WSSSTGRRSL (67 aa)) directs the protein to the mitochondrion. Residues 62–75 (TGRRSLSSDAGAKT) show a composition bias toward low complexity. The tract at residues 62–109 (TGRRSLSSDAGAKTTGDDDDLEDKNVDLATPDETSSDSEDGEEFSGDE) is disordered. Residues 95-109 (TSSDSEDGEEFSGDE) show a composition bias toward acidic residues. PPR repeat units follow at residues 226-260 (GELV…GFPL), 261-294 (STFT…NLKP), 295-329 (NLNT…GVEL), 330-364 (DLRA…SLEE), 432-466 (SSNV…GCNI), 467-502 (GALT…QIKP), and 503-537 (LMSS…GYQS).

Belongs to the PPR family. P subfamily.

The protein resides in the mitochondrion. This Arabidopsis thaliana (Mouse-ear cress) protein is Pentatricopeptide repeat-containing protein At1g15480, mitochondrial.